The sequence spans 214 residues: Auxin-binding protein ABP20 (214 aa).

The N-terminal stretch at M1 to A23 is a signal peptide. The cysteines at positions 29 and 44 are disulfide-linked. Residues S58–K204 enclose the Cupin type-1 domain. N65 carries N-linked (GlcNAc...) asparagine glycosylation. Mn(2+) is bound by residues H106, H108, E113, and H152.

It belongs to the germin family. As to quaternary structure, interacts with ABP19.

The protein localises to the secreted. It localises to the extracellular space. It is found in the apoplast. Its subcellular location is the cell wall. In terms of biological role, probable receptor for the plant growth-promoting hormone auxin. This is Auxin-binding protein ABP20 (ABP20) from Prunus persica (Peach).